The following is a 215-amino-acid chain: Cytochrome b6 (215 aa).

Residues 32 to 52 (IFYCLGGITLTCFLVQVATGF) form a helical membrane-spanning segment. Residue C35 coordinates heme c. Residues H86 and H100 each coordinate heme b. A run of 3 helical transmembrane segments spans residues 90 to 110 (ASMM…TGGF), 116 to 136 (LTWV…VTGY), and 186 to 206 (LHTF…FLMI). The heme b site is built by H187 and H202.

It belongs to the cytochrome b family. PetB subfamily. The 4 large subunits of the cytochrome b6-f complex are cytochrome b6, subunit IV (17 kDa polypeptide, PetD), cytochrome f and the Rieske protein, while the 4 small subunits are PetG, PetL, PetM and PetN. The complex functions as a dimer. Requires heme b as cofactor. It depends on heme c as a cofactor.

It localises to the plastid. The protein localises to the chloroplast thylakoid membrane. In terms of biological role, component of the cytochrome b6-f complex, which mediates electron transfer between photosystem II (PSII) and photosystem I (PSI), cyclic electron flow around PSI, and state transitions. The protein is Cytochrome b6 of Pelargonium hortorum (Common geranium).